Consider the following 339-residue polypeptide: Quinolinate synthase (339 aa).

2 residues coordinate iminosuccinate: His63 and Ser81. Residue Cys126 coordinates [4Fe-4S] cluster. Residues 152–154 and Ser169 each bind iminosuccinate; that span reads YVN. Cys211 lines the [4Fe-4S] cluster pocket. Residues 237–239 and Thr254 each bind iminosuccinate; that span reads HPE. Cys297 lines the [4Fe-4S] cluster pocket.

It belongs to the quinolinate synthase family. Type 2 subfamily. It depends on [4Fe-4S] cluster as a cofactor.

Its subcellular location is the cytoplasm. It carries out the reaction iminosuccinate + dihydroxyacetone phosphate = quinolinate + phosphate + 2 H2O + H(+). It functions in the pathway cofactor biosynthesis; NAD(+) biosynthesis; quinolinate from iminoaspartate: step 1/1. Its function is as follows. Catalyzes the condensation of iminoaspartate with dihydroxyacetone phosphate to form quinolinate. The sequence is that of Quinolinate synthase from Xylella fastidiosa (strain 9a5c).